The sequence spans 326 residues: MLTLARQQQRQNIRWLLCLSVLMLLALLLSLCAGEQWISPGDWFSPRGELFVWQIRLPRTLAVLLVGAALAISGAVMQALFENPLAEPGLLGVSNGAGVGLIAAVLLGQGQLPNWALGLCAIAGALIITLILLRFARRHLSTSRLLLAGVALGIICSALMTWAIYFSTSVDLRQLMYWMMGGFGGVDWRQSWLMLALIPVLLWICCQSRPMNMLALGEISARQLGLPLWFWRNVLVAATGWMVGVSVALAGAIGFIGLVIPHILRLCGLTDHRVLLPGCALAGASALLLADVVARLALAAAELPIGVVTATLGAPVFIWLLLKAGR.

A run of 9 helical transmembrane segments spans residues 15 to 35 (WLLC…CAGE), 61 to 81 (LAVL…QALF), 88 to 108 (PGLL…VLLG), 112 to 132 (LPNW…TLIL), 146 to 166 (LLAG…AIYF), 184 to 204 (GGVD…LLWI), 240 to 260 (GWMV…GLVI), 274 to 294 (VLLP…DVVA), and 302 to 322 (ELPI…WLLL).

Belongs to the binding-protein-dependent transport system permease family. FecCD subfamily. As to quaternary structure, the complex is composed of two ATP-binding proteins (BtuD), two transmembrane proteins (BtuC) and a solute-binding protein (BtuF).

Its subcellular location is the cell inner membrane. Its function is as follows. Part of the ABC transporter complex BtuCDF involved in vitamin B12 import. Involved in the translocation of the substrate across the membrane. The sequence is that of Vitamin B12 import system permease protein BtuC from Escherichia coli O8 (strain IAI1).